Consider the following 116-residue polypeptide: Large ribosomal subunit protein uL18 (116 aa).

Belongs to the universal ribosomal protein uL18 family. As to quaternary structure, part of the 50S ribosomal subunit; part of the 5S rRNA/L5/L18/L25 subcomplex. Contacts the 5S and 23S rRNAs.

Functionally, this is one of the proteins that bind and probably mediate the attachment of the 5S RNA into the large ribosomal subunit, where it forms part of the central protuberance. This chain is Large ribosomal subunit protein uL18, found in Shewanella loihica (strain ATCC BAA-1088 / PV-4).